A 115-amino-acid chain; its full sequence is Integration host factor subunit alpha (115 aa).

The protein belongs to the bacterial histone-like protein family. As to quaternary structure, heterodimer of an alpha and a beta chain.

Its function is as follows. This protein is one of the two subunits of integration host factor, a specific DNA-binding protein that functions in genetic recombination as well as in transcriptional and translational control. The chain is Integration host factor subunit alpha from Burkholderia pseudomallei (strain K96243).